A 362-amino-acid polypeptide reads, in one-letter code: N5-carboxyaminoimidazole ribonucleotide synthase (362 aa).

Residues Arg-85, Lys-125, 130-136 (GYDGRGQ), 158-161 (EKFI), Glu-166, and 244-245 (NE) contribute to the ATP site. The region spanning 89–274 (KSLLDELNLS…QFELHLRALL (186 aa)) is the ATP-grasp domain.

This sequence belongs to the PurK/PurT family. As to quaternary structure, homodimer.

It carries out the reaction 5-amino-1-(5-phospho-beta-D-ribosyl)imidazole + hydrogencarbonate + ATP = 5-carboxyamino-1-(5-phospho-D-ribosyl)imidazole + ADP + phosphate + 2 H(+). It functions in the pathway purine metabolism; IMP biosynthesis via de novo pathway; 5-amino-1-(5-phospho-D-ribosyl)imidazole-4-carboxylate from 5-amino-1-(5-phospho-D-ribosyl)imidazole (N5-CAIR route): step 1/2. Functionally, catalyzes the ATP-dependent conversion of 5-aminoimidazole ribonucleotide (AIR) and HCO(3)(-) to N5-carboxyaminoimidazole ribonucleotide (N5-CAIR). The polypeptide is N5-carboxyaminoimidazole ribonucleotide synthase (Haemophilus influenzae (strain ATCC 51907 / DSM 11121 / KW20 / Rd)).